We begin with the raw amino-acid sequence, 514 residues long: Thymus-specific serine protease (514 aa).

The first 24 residues, 1-24 (MAVWLAQWLGPLLLVSLWGLLAPA), serve as a signal peptide directing secretion. Asn-70 and Asn-172 each carry an N-linked (GlcNAc...) asparagine glycan. Ser-185 serves as the catalytic Charge relay system. Residue Asn-321 is glycosylated (N-linked (GlcNAc...) asparagine). Residues Asp-447 and His-472 each act as charge relay system in the active site.

This sequence belongs to the peptidase S28 family. In terms of tissue distribution, expressed predominantly in cortical thymic epithelial cells.

The protein resides in the cytoplasmic vesicle. Functionally, protease that may play a role in T-cell development. The protein is Thymus-specific serine protease (PRSS16) of Homo sapiens (Human).